A 221-amino-acid chain; its full sequence is Secreted protein BARF1 (221 aa).

An N-terminal signal peptide occupies residues methionine 1–alanine 20. 2 consecutive Ig-like domains span residues valine 21 to serine 120 and proline 124 to serine 220. An N-linked (GlcNAc...) asparagine; by host glycan is attached at asparagine 95. A disulfide bridge connects residues cysteine 146 and cysteine 201.

Homohexamer. Interacts with human CSF1. Phosphorylated on serine and threonine by host.

It localises to the secreted. In terms of biological role, plays diverse functions in immunomodulation and oncogenicity, maybe by acting as a functional receptor for human CSF1. May inhibit interferon secretion from mononuclear cells. Exhibits oncogenic activity in vitro. The protein is Secreted protein BARF1 of Epstein-Barr virus (strain B95-8) (HHV-4).